The sequence spans 237 residues: Uridylate kinase (237 aa).

Position 9 to 12 (9 to 12 (KLSG)) interacts with ATP. UMP is bound at residue G51. ATP contacts are provided by G52 and R56. Residues D71 and 132 to 139 (CGNPFFTT) contribute to the UMP site. Residues T159, Y165, and D168 each coordinate ATP.

The protein belongs to the UMP kinase family. Homohexamer.

It localises to the cytoplasm. It carries out the reaction UMP + ATP = UDP + ADP. It participates in pyrimidine metabolism; CTP biosynthesis via de novo pathway; UDP from UMP (UMPK route): step 1/1. Its activity is regulated as follows. Inhibited by UTP. Its function is as follows. Catalyzes the reversible phosphorylation of UMP to UDP. This chain is Uridylate kinase, found in Prochlorococcus marinus (strain MIT 9303).